The following is a 611-amino-acid chain: Depudecin biosynthesis cluster-specific transcription activator DEP6 (611 aa).

Residues 17–44 constitute a DNA-binding region (zn(2)-C6 fungal-type); sequence CEICRQRKVRCDRALPRCRRCERLNQAC. Residues 76 to 125 form a disordered region; sequence DAPRGPASSMSSQSRSDSAAPAASRVPSVSASVPNSAATNPMDMVGTRSS. Over residues 78-113 the composition is skewed to low complexity; it reads PRGPASSMSSQSRSDSAAPAASRVPSVSASVPNSAA.

It localises to the nucleus. In terms of biological role, transcription factor that positively regulates the expression of the gene cluster that mediates the biosynthesis of depudecin, a highly oxidized eleven-carbon linear polyketide that acts as a histone deacetylase (HDAC) inhibitor and makes a small contribution to pathogenesis. The protein is Depudecin biosynthesis cluster-specific transcription activator DEP6 of Fusarium langsethiae.